The following is a 379-amino-acid chain: Cytochrome b (379 aa).

A run of 4 helical transmembrane segments spans residues 33–53 (FGSLLGACLIIQVITGLFLAM), 77–98 (WMIRYLHANGASMFFLCLFIHV), 113–133 (WNVGIILLFSVMATAFMGYVL), and 178–198 (FFALHFILPFIISAWVMIHLL). Residues His-83 and His-97 each contribute to the heme b site. The heme b site is built by His-182 and His-196. His-201 contributes to the a ubiquinone binding site. Transmembrane regions (helical) follow at residues 226–246 (TKDFLGLLLLILLLMTLALFY), 288–308 (LGGVVALILSILILMIIPFLQ), 320–340 (LSQFLFWILVADLLTLTWIGG), and 347–367 (FISIGQTASMLYFSLMIFIMP).

Belongs to the cytochrome b family. As to quaternary structure, the cytochrome bc1 complex contains 11 subunits: 3 respiratory subunits (MT-CYB, CYC1 and UQCRFS1), 2 core proteins (UQCRC1 and UQCRC2) and 6 low-molecular weight proteins (UQCRH/QCR6, UQCRB/QCR7, UQCRQ/QCR8, UQCR10/QCR9, UQCR11/QCR10 and a cleavage product of UQCRFS1). This cytochrome bc1 complex then forms a dimer. Heme b serves as cofactor.

It localises to the mitochondrion inner membrane. Its function is as follows. Component of the ubiquinol-cytochrome c reductase complex (complex III or cytochrome b-c1 complex) that is part of the mitochondrial respiratory chain. The b-c1 complex mediates electron transfer from ubiquinol to cytochrome c. Contributes to the generation of a proton gradient across the mitochondrial membrane that is then used for ATP synthesis. The sequence is that of Cytochrome b (MT-CYB) from Lepilemur septentrionalis (Northern sportive lemur).